Consider the following 421-residue polypeptide: Serine hydroxymethyltransferase (421 aa).

(6S)-5,6,7,8-tetrahydrofolate is bound by residues Leu-121 and 125 to 127 (GHL). Lys-229 is modified (N6-(pyridoxal phosphate)lysine).

This sequence belongs to the SHMT family. As to quaternary structure, homodimer. Pyridoxal 5'-phosphate is required as a cofactor.

The protein resides in the cytoplasm. It carries out the reaction (6R)-5,10-methylene-5,6,7,8-tetrahydrofolate + glycine + H2O = (6S)-5,6,7,8-tetrahydrofolate + L-serine. Its pathway is one-carbon metabolism; tetrahydrofolate interconversion. It participates in amino-acid biosynthesis; glycine biosynthesis; glycine from L-serine: step 1/1. In terms of biological role, catalyzes the reversible interconversion of serine and glycine with tetrahydrofolate (THF) serving as the one-carbon carrier. This reaction serves as the major source of one-carbon groups required for the biosynthesis of purines, thymidylate, methionine, and other important biomolecules. Also exhibits THF-independent aldolase activity toward beta-hydroxyamino acids, producing glycine and aldehydes, via a retro-aldol mechanism. This is Serine hydroxymethyltransferase from Haemophilus influenzae (strain ATCC 51907 / DSM 11121 / KW20 / Rd).